A 645-amino-acid chain; its full sequence is Cysteine-rich receptor-like protein kinase 19 (645 aa).

Positions 1–20 (MSSLISFIFLFLFSSITASA) are cleaved as a signal peptide. At 21–262 (QNTFYLYHNC…PRPGKGGNSS (242 aa)) the chain is on the extracellular side. 2 consecutive Gnk2-homologous domains span residues 24–129 (FYLY…NRNI) and 135–239 (TDGG…NYAF). Residues asparagine 29, asparagine 39, asparagine 57, asparagine 101, asparagine 185, asparagine 241, and asparagine 260 are each glycosylated (N-linked (GlcNAc...) asparagine). Residues 263 to 283 (VIIIAVVVPITVLFLLLVAVF) form a helical membrane-spanning segment. At 284 to 645 (SVRAKNKRTL…EASITRVTPR (362 aa)) the chain is on the cytoplasmic side. Residues 326–603 (FLPINKLGQG…IVQMLTTSLI (278 aa)) enclose the Protein kinase domain. ATP contacts are provided by residues 332–340 (LGQGGFGEV) and lysine 354. The residue at position 399 (tyrosine 399) is a Phosphotyrosine. Aspartate 451 (proton acceptor) is an active-site residue. At threonine 491 the chain carries Phosphothreonine. The residue at position 499 (tyrosine 499) is a Phosphotyrosine. Residues 616–645 (RSKQEQAGPSIDSSTHCSVDEASITRVTPR) form a disordered region. The segment covering 620–632 (EQAGPSIDSSTHC) has biased composition (polar residues).

It belongs to the protein kinase superfamily. Ser/Thr protein kinase family. CRK subfamily. As to quaternary structure, interacts with MWL1.

The protein localises to the membrane. It carries out the reaction L-seryl-[protein] + ATP = O-phospho-L-seryl-[protein] + ADP + H(+). The catalysed reaction is L-threonyl-[protein] + ATP = O-phospho-L-threonyl-[protein] + ADP + H(+). In Arabidopsis thaliana (Mouse-ear cress), this protein is Cysteine-rich receptor-like protein kinase 19 (CRK19).